The chain runs to 134 residues: Translation initiation factor 2 subunit beta (134 aa).

It belongs to the eIF-2-beta/eIF-5 family. In terms of assembly, heterotrimer composed of an alpha, a beta and a gamma chain.

Functionally, eIF-2 functions in the early steps of protein synthesis by forming a ternary complex with GTP and initiator tRNA. The chain is Translation initiation factor 2 subunit beta from Pyrobaculum arsenaticum (strain DSM 13514 / JCM 11321 / PZ6).